The chain runs to 277 residues: Release factor glutamine methyltransferase (277 aa).

S-adenosyl-L-methionine contacts are provided by residues 117-121, D140, W168, and N183; that span reads GTGTG. Residue 183–186 coordinates substrate; that stretch reads NPPY.

This sequence belongs to the protein N5-glutamine methyltransferase family. PrmC subfamily.

It carries out the reaction L-glutaminyl-[peptide chain release factor] + S-adenosyl-L-methionine = N(5)-methyl-L-glutaminyl-[peptide chain release factor] + S-adenosyl-L-homocysteine + H(+). Its function is as follows. Methylates the class 1 translation termination release factors RF1/PrfA and RF2/PrfB on the glutamine residue of the universally conserved GGQ motif. The polypeptide is Release factor glutamine methyltransferase (Salmonella typhimurium (strain LT2 / SGSC1412 / ATCC 700720)).